The primary structure comprises 327 residues: Arabinose 5-phosphate isomerase KpsF (327 aa).

In terms of domain architecture, SIS spans 48–191 (VLNLIMNCKG…AIAMIHQRKF (144 aa)). 63 to 68 (GMGKSG) contributes to the ATP binding site. Substrate contacts are provided by residues 82-83 (GT), His89, His95, 121-130 (KLVPSLKNFG), and 155-157 (HMA). His89 is a Zn(2+) binding site. CBS domains lie at 217 to 273 (MQHD…EGSL) and 282 to 327 (MTRE…RIFD).

Homotetramer.

The enzyme catalyses D-arabinose 5-phosphate = D-ribulose 5-phosphate. With respect to regulation, inhibited by 10 uM zinc, cadmium or mercury ions. Functionally, involved in the biosynthesis of K-antigen capsules. Catalyzes the reversible aldol-ketol isomerization between D-ribulose 5-phosphate (Ru5P) and D-arabinose 5-phosphate (A5P). The chain is Arabinose 5-phosphate isomerase KpsF from Escherichia coli O6:H1 (strain CFT073 / ATCC 700928 / UPEC).